A 143-amino-acid chain; its full sequence is Nucleoside diphosphate kinase (143 aa).

Residues K10, F58, R86, T92, R103, and N113 each contribute to the ATP site. Catalysis depends on H116, which acts as the Pros-phosphohistidine intermediate.

The protein belongs to the NDK family. In terms of assembly, homotetramer. The cofactor is Mg(2+).

The protein resides in the cytoplasm. It catalyses the reaction a 2'-deoxyribonucleoside 5'-diphosphate + ATP = a 2'-deoxyribonucleoside 5'-triphosphate + ADP. The enzyme catalyses a ribonucleoside 5'-diphosphate + ATP = a ribonucleoside 5'-triphosphate + ADP. Functionally, major role in the synthesis of nucleoside triphosphates other than ATP. The ATP gamma phosphate is transferred to the NDP beta phosphate via a ping-pong mechanism, using a phosphorylated active-site intermediate. This chain is Nucleoside diphosphate kinase, found in Ehrlichia ruminantium (strain Welgevonden).